Reading from the N-terminus, the 257-residue chain is Probable dihydroorotate dehydrogenase B (NAD(+)), electron transfer subunit (257 aa).

The 88-residue stretch at 2–89 (EKPVICRIKE…RGPYGTYFEP (88 aa)) folds into the FAD-binding FR-type domain. Cys208, Cys213, Cys216, and Cys226 together coordinate [2Fe-2S] cluster.

The protein belongs to the PyrK family. As to quaternary structure, heterotetramer of 2 PyrK and 2 PyrD type B subunits. The cofactor is [2Fe-2S] cluster. FAD is required as a cofactor.

Its pathway is pyrimidine metabolism; UMP biosynthesis via de novo pathway; orotate from (S)-dihydroorotate (NAD(+) route): step 1/1. Functionally, responsible for channeling the electrons from the oxidation of dihydroorotate from the FMN redox center in the PyrD type B subunit to the ultimate electron acceptor NAD(+). This Methanocaldococcus jannaschii (strain ATCC 43067 / DSM 2661 / JAL-1 / JCM 10045 / NBRC 100440) (Methanococcus jannaschii) protein is Probable dihydroorotate dehydrogenase B (NAD(+)), electron transfer subunit.